The following is a 469-amino-acid chain: Aspartyl/glutamyl-tRNA(Asn/Gln) amidotransferase subunit B (469 aa).

This sequence belongs to the GatB/GatE family. GatB subfamily. As to quaternary structure, heterotrimer of A, B and C subunits.

It carries out the reaction L-glutamyl-tRNA(Gln) + L-glutamine + ATP + H2O = L-glutaminyl-tRNA(Gln) + L-glutamate + ADP + phosphate + H(+). The catalysed reaction is L-aspartyl-tRNA(Asn) + L-glutamine + ATP + H2O = L-asparaginyl-tRNA(Asn) + L-glutamate + ADP + phosphate + 2 H(+). Functionally, allows the formation of correctly charged Asn-tRNA(Asn) or Gln-tRNA(Gln) through the transamidation of misacylated Asp-tRNA(Asn) or Glu-tRNA(Gln) in organisms which lack either or both of asparaginyl-tRNA or glutaminyl-tRNA synthetases. The reaction takes place in the presence of glutamine and ATP through an activated phospho-Asp-tRNA(Asn) or phospho-Glu-tRNA(Gln). The polypeptide is Aspartyl/glutamyl-tRNA(Asn/Gln) amidotransferase subunit B (Thermus thermophilus (strain ATCC BAA-163 / DSM 7039 / HB27)).